We begin with the raw amino-acid sequence, 874 residues long: Alanine--tRNA ligase (874 aa).

Zn(2+) is bound by residues His562, His566, Cys664, and His668.

Belongs to the class-II aminoacyl-tRNA synthetase family. The cofactor is Zn(2+).

The protein resides in the cytoplasm. It catalyses the reaction tRNA(Ala) + L-alanine + ATP = L-alanyl-tRNA(Ala) + AMP + diphosphate. Its function is as follows. Catalyzes the attachment of alanine to tRNA(Ala) in a two-step reaction: alanine is first activated by ATP to form Ala-AMP and then transferred to the acceptor end of tRNA(Ala). Also edits incorrectly charged Ser-tRNA(Ala) and Gly-tRNA(Ala) via its editing domain. The polypeptide is Alanine--tRNA ligase (Shewanella baltica (strain OS155 / ATCC BAA-1091)).